A 540-amino-acid polypeptide reads, in one-letter code: O-phosphoserine--tRNA(Cys) ligase (540 aa).

Residues 188 to 190 (HMT), 233 to 235 (SAS), 275 to 276 (YY), and Asn319 contribute to the substrate site.

Belongs to the class-II aminoacyl-tRNA synthetase family. O-phosphoseryl-tRNA(Cys) synthetase subfamily. As to quaternary structure, homotetramer. Interacts with SepCysS.

The enzyme catalyses tRNA(Cys) + O-phospho-L-serine + ATP = O-phospho-L-seryl-tRNA(Cys) + AMP + diphosphate. Its function is as follows. Catalyzes the attachment of O-phosphoserine (Sep) to tRNA(Cys). The sequence is that of O-phosphoserine--tRNA(Cys) ligase from Methanococcus aeolicus (strain ATCC BAA-1280 / DSM 17508 / OCM 812 / Nankai-3).